Reading from the N-terminus, the 431-residue chain is UDP-N-acetylglucosamine 1-carboxyvinyltransferase (431 aa).

Position 22-23 (22-23 (KN)) interacts with phosphoenolpyruvate. UDP-N-acetyl-alpha-D-glucosamine is bound at residue Arg-93. Residue Cys-117 is the Proton donor of the active site. 2-(S-cysteinyl)pyruvic acid O-phosphothioketal is present on Cys-117. 2 residues coordinate UDP-N-acetyl-alpha-D-glucosamine: Asp-307 and Val-329.

This sequence belongs to the EPSP synthase family. MurA subfamily.

The protein resides in the cytoplasm. The catalysed reaction is phosphoenolpyruvate + UDP-N-acetyl-alpha-D-glucosamine = UDP-N-acetyl-3-O-(1-carboxyvinyl)-alpha-D-glucosamine + phosphate. The protein operates within cell wall biogenesis; peptidoglycan biosynthesis. Functionally, cell wall formation. Adds enolpyruvyl to UDP-N-acetylglucosamine. The polypeptide is UDP-N-acetylglucosamine 1-carboxyvinyltransferase (Nitrosococcus oceani (strain ATCC 19707 / BCRC 17464 / JCM 30415 / NCIMB 11848 / C-107)).